A 339-amino-acid polypeptide reads, in one-letter code: Ketol-acid reductoisomerase (NADP(+)) (339 aa).

The 182-residue stretch at 1 to 182 folds into the KARI N-terminal Rossmann domain; that stretch reads MRVYYDRDAD…GGGRSGIIET (182 aa). NADP(+) is bound by residues 24–27, lysine 48, serine 51, threonine 53, and 83–86; these read YGSQ and DELQ. Histidine 108 is a catalytic residue. Residue glycine 134 coordinates NADP(+). Residues 183–328 enclose the KARI C-terminal knotted domain; it reads NFKEECETDL…AKLRGMMPWI (146 aa). Residues aspartate 191, glutamate 195, glutamate 227, and glutamate 231 each coordinate Mg(2+). Serine 252 is a substrate binding site.

It belongs to the ketol-acid reductoisomerase family. Mg(2+) is required as a cofactor.

The catalysed reaction is (2R)-2,3-dihydroxy-3-methylbutanoate + NADP(+) = (2S)-2-acetolactate + NADPH + H(+). It carries out the reaction (2R,3R)-2,3-dihydroxy-3-methylpentanoate + NADP(+) = (S)-2-ethyl-2-hydroxy-3-oxobutanoate + NADPH + H(+). The protein operates within amino-acid biosynthesis; L-isoleucine biosynthesis; L-isoleucine from 2-oxobutanoate: step 2/4. It participates in amino-acid biosynthesis; L-valine biosynthesis; L-valine from pyruvate: step 2/4. Involved in the biosynthesis of branched-chain amino acids (BCAA). Catalyzes an alkyl-migration followed by a ketol-acid reduction of (S)-2-acetolactate (S2AL) to yield (R)-2,3-dihydroxy-isovalerate. In the isomerase reaction, S2AL is rearranged via a Mg-dependent methyl migration to produce 3-hydroxy-3-methyl-2-ketobutyrate (HMKB). In the reductase reaction, this 2-ketoacid undergoes a metal-dependent reduction by NADPH to yield (R)-2,3-dihydroxy-isovalerate. This Sinorhizobium medicae (strain WSM419) (Ensifer medicae) protein is Ketol-acid reductoisomerase (NADP(+)).